The primary structure comprises 224 residues: N-terminal Xaa-Pro-Lys N-methyltransferase 1 (224 aa).

Residues G70, R75, 92–94 (DVT), 120–121 (LQ), and Q136 each bind S-adenosyl-L-methionine.

The protein belongs to the methyltransferase superfamily. NTM1 family.

The protein resides in the nucleus. The enzyme catalyses N-terminal L-alanyl-L-prolyl-L-lysyl-[protein] + 3 S-adenosyl-L-methionine = N-terminal N,N,N-trimethyl-L-alanyl-L-prolyl-L-lysyl-[protein] + 3 S-adenosyl-L-homocysteine + 3 H(+). It carries out the reaction N-terminal L-seryl-L-prolyl-L-lysyl-[protein] + 3 S-adenosyl-L-methionine = N-terminal N,N,N-trimethyl-L-seryl-L-prolyl-L-lysyl-[protein] + 3 S-adenosyl-L-homocysteine + 3 H(+). The catalysed reaction is N-terminal L-prolyl-L-prolyl-L-lysyl-[protein] + 2 S-adenosyl-L-methionine = N-terminal N,N-dimethyl-L-prolyl-L-prolyl-L-lysyl-[protein] + 2 S-adenosyl-L-homocysteine + 2 H(+). In terms of biological role, distributive alpha-N-methyltransferase that methylates the N-terminus of target proteins containing the N-terminal motif [Ala/Gly/Pro/Ser]-Pro-Lys when the initiator Met is cleaved. Specifically catalyzes mono-, di- or tri-methylation of the exposed alpha-amino group of the Ala, Gly or Ser residue in the [Ala/Gly/Ser]-Pro-Lys motif and mono- or di-methylation of Pro in the Pro-Pro-Lys motif. Required during mitosis for normal bipolar spindle formation and chromosome segregation via its action on target proteins. The chain is N-terminal Xaa-Pro-Lys N-methyltransferase 1 (ntmt1) from Xenopus tropicalis (Western clawed frog).